Here is an 87-residue protein sequence, read N- to C-terminus: Small ribosomal subunit protein uS17 (87 aa).

It belongs to the universal ribosomal protein uS17 family. As to quaternary structure, part of the 30S ribosomal subunit.

One of the primary rRNA binding proteins, it binds specifically to the 5'-end of 16S ribosomal RNA. The polypeptide is Small ribosomal subunit protein uS17 (Bacillus cereus (strain ATCC 14579 / DSM 31 / CCUG 7414 / JCM 2152 / NBRC 15305 / NCIMB 9373 / NCTC 2599 / NRRL B-3711)).